A 448-amino-acid polypeptide reads, in one-letter code: Phosphoglucosamine mutase (448 aa).

Catalysis depends on S101, which acts as the Phosphoserine intermediate. The Mg(2+) site is built by S101, D241, D243, and D245. Phosphoserine is present on S101.

It belongs to the phosphohexose mutase family. Requires Mg(2+) as cofactor. Post-translationally, activated by phosphorylation.

It carries out the reaction alpha-D-glucosamine 1-phosphate = D-glucosamine 6-phosphate. In terms of biological role, catalyzes the conversion of glucosamine-6-phosphate to glucosamine-1-phosphate. The polypeptide is Phosphoglucosamine mutase (Macrococcus caseolyticus (strain JCSC5402) (Macrococcoides caseolyticum)).